Consider the following 454-residue polypeptide: Trigger factor (454 aa).

One can recognise a PPIase FKBP-type domain in the interval 169–261; that stretch reads GDVAIADYEG…LKELKSRELP (93 aa).

Belongs to the FKBP-type PPIase family. Tig subfamily.

The protein resides in the cytoplasm. It carries out the reaction [protein]-peptidylproline (omega=180) = [protein]-peptidylproline (omega=0). In terms of biological role, involved in protein export. Acts as a chaperone by maintaining the newly synthesized protein in an open conformation. Functions as a peptidyl-prolyl cis-trans isomerase. The chain is Trigger factor from Picosynechococcus sp. (strain ATCC 27264 / PCC 7002 / PR-6) (Agmenellum quadruplicatum).